The following is a 439-amino-acid chain: Histidinol dehydrogenase (439 aa).

Tyrosine 125, glutamine 187, and asparagine 210 together coordinate NAD(+). The substrate site is built by threonine 233, glutamine 255, and histidine 258. 2 residues coordinate Zn(2+): glutamine 255 and histidine 258. Active-site proton acceptor residues include glutamate 323 and histidine 324. Positions 324, 357, 411, and 416 each coordinate substrate. Zn(2+) is bound at residue aspartate 357. Histidine 416 lines the Zn(2+) pocket.

The protein belongs to the histidinol dehydrogenase family. Zn(2+) serves as cofactor.

The enzyme catalyses L-histidinol + 2 NAD(+) + H2O = L-histidine + 2 NADH + 3 H(+). The protein operates within amino-acid biosynthesis; L-histidine biosynthesis; L-histidine from 5-phospho-alpha-D-ribose 1-diphosphate: step 9/9. In terms of biological role, catalyzes the sequential NAD-dependent oxidations of L-histidinol to L-histidinaldehyde and then to L-histidine. The protein is Histidinol dehydrogenase of Symbiobacterium thermophilum (strain DSM 24528 / JCM 14929 / IAM 14863 / T).